We begin with the raw amino-acid sequence, 86 residues long: Small ribosomal subunit protein bS16 (86 aa).

This sequence belongs to the bacterial ribosomal protein bS16 family.

The polypeptide is Small ribosomal subunit protein bS16 (Borreliella afzelii (strain PKo) (Borrelia afzelii)).